A 404-amino-acid chain; its full sequence is Coenzyme F420H(2) oxidase (404 aa).

Histidine 84, glutamate 86, aspartate 88, histidine 89, histidine 152, aspartate 170, and histidine 233 together coordinate Fe cation. Residues 259-399 (VTVIYDTMHH…ACFEAGRRLA (141 aa)) enclose the Flavodoxin-like domain. FMN-binding positions include 265–270 (TMHHST), 317–320 (AIYD), and 351–356 (SMGGRG).

It in the N-terminal section; belongs to the zinc metallo-hydrolase group 3 family. FMN is required as a cofactor. It depends on Fe cation as a cofactor.

It catalyses the reaction 2 reduced coenzyme F420-(gamma-L-Glu)(n) + O2 = 2 oxidized coenzyme F420-(gamma-L-Glu)(n) + 2 H2O + 2 H(+). In terms of biological role, catalyzes the oxidation of F420H(2) with O(2). May be involved in O(2) detoxification, reducing the intracellular O(2) concentration to a level allowing growth at the expense of methane formation. In Methanothermobacter thermautotrophicus (strain ATCC 29096 / DSM 1053 / JCM 10044 / NBRC 100330 / Delta H) (Methanobacterium thermoautotrophicum), this protein is Coenzyme F420H(2) oxidase.